Here is a 473-residue protein sequence, read N- to C-terminus: Keratin, type I cuticular Ha6 (473 aa).

Residues 1 to 93 form a head region; it reads MATQICTPTF…FCEGAFNGNE (93 aa). Positions 93–404 constitute an IF rod domain; the sequence is EKATMQILND…RLLDGEDCKL (312 aa). The coil 1A stretch occupies residues 94–128; that stretch reads KATMQILNDRLANYLEKVRQLEQENTQLECRIREW. Residues 129–139 form a linker 1 region; the sequence is YECQIPYICPD. The coil 1B stretch occupies residues 140–240; that stretch reads YQSYFKTAEE…HEEEVNALRS (101 aa). The segment at 241–256 is linker 12; sequence QLGDRLNVEVDAAPPV. Residues 257 to 400 are coil 2; sequence DLNKILDDMR…ATYRRLLDGE (144 aa). Residues 401–473 form a tail region; that stretch reads DCKLPAHPCS…SREHVVPRAM (73 aa).

It belongs to the intermediate filament family. Heterotetramer of two type I and two type II keratins. In terms of tissue distribution, in skin, only expressed in the suprabasal cells of tail scale epidermis. Suprabasally expressed in stratified squamous epithelia and also in the posterior unit of the complex filiform papillae of tongue. Expressed in rare anatomical sites in which an orthokeratinized stratum corneum would be too soft and a hard keratinized structure would be too rigid to meet the functional requirement of the respective epithelia.

The protein is Keratin, type I cuticular Ha6 of Mus musculus (Mouse).